A 21-amino-acid chain; its full sequence is Peptidyl-prolyl cis-trans isomerase (21 aa).

The disordered stretch occupies residues 1-21 (ENFKIKHTEPGLLSMANAGKN).

This sequence belongs to the cyclophilin-type PPIase family. PPIase A subfamily.

It carries out the reaction [protein]-peptidylproline (omega=180) = [protein]-peptidylproline (omega=0). In terms of biological role, PPIases accelerate the folding of proteins. It catalyzes the cis-trans isomerization of proline imidic peptide bonds in oligopeptides. The chain is Peptidyl-prolyl cis-trans isomerase from Naegleria fowleri (Brain eating amoeba).